The chain runs to 505 residues: Probable inorganic carbon transporter subunit DabB (505 aa).

13 consecutive transmembrane segments (helical) span residues 9–29 (SLLT…LLFL), 37–57 (FVRI…LILA), 68–88 (WHLD…GFII), 105–123 (YFTL…WLSG), 162–182 (LFLL…HATG), 204–224 (TGIQ…WPFQ), 231–251 (IVAP…AGGI), 259–279 (LFHG…SVLI), 303–323 (GFML…HLIL), 355–375 (LWVM…WLTA), 382–402 (LISA…LVAF), 410–430 (IAGL…HHLF), and 446–466 (MSAV…GTWV).

The protein belongs to the inorganic carbon transporter (TC 9.A.2) DabB family. As to quaternary structure, forms a complex with DabA.

The protein resides in the cell membrane. Its function is as follows. Part of an energy-coupled inorganic carbon pump. The sequence is that of Probable inorganic carbon transporter subunit DabB from Bacillus subtilis (strain 168).